The primary structure comprises 314 residues: Probable cell division protein WhiA (314 aa).

A DNA-binding region (H-T-H motif) is located at residues 277–311; the sequence is TLKELGEKMPSGAISKSGINHRLRKLNQLAEGYQQ.

The protein belongs to the WhiA family.

Functionally, involved in cell division and chromosome segregation. The chain is Probable cell division protein WhiA from Latilactobacillus sakei subsp. sakei (strain 23K) (Lactobacillus sakei subsp. sakei).